A 92-amino-acid chain; its full sequence is PqqA binding protein (92 aa).

The protein belongs to the PqqD family. Monomer. Interacts with PqqE.

Its pathway is cofactor biosynthesis; pyrroloquinoline quinone biosynthesis. In terms of biological role, functions as a PqqA binding protein and presents PqqA to PqqE, in the pyrroloquinoline quinone (PQQ) biosynthetic pathway. This chain is PqqA binding protein, found in Pseudomonas aeruginosa (strain UCBPP-PA14).